A 134-amino-acid chain; its full sequence is ATP synthase epsilon chain (134 aa).

Belongs to the ATPase epsilon chain family. F-type ATPases have 2 components, CF(1) - the catalytic core - and CF(0) - the membrane proton channel. CF(1) has five subunits: alpha(3), beta(3), gamma(1), delta(1), epsilon(1). CF(0) has three main subunits: a, b and c.

It is found in the cell membrane. Functionally, produces ATP from ADP in the presence of a proton gradient across the membrane. This is ATP synthase epsilon chain from Listeria innocua serovar 6a (strain ATCC BAA-680 / CLIP 11262).